Reading from the N-terminus, the 270-residue chain is Eukaryotic translation initiation factor 2 subunit beta (270 aa).

Residues 1-38 form a disordered region; the sequence is MADEEQMERKEEATEIAPFDPTKKKKKKKVVIQDPADE.

This sequence belongs to the eIF-2-beta/eIF-5 family. In terms of assembly, eukaryotic translation initiation factor 2 eIF2 is a heterotrimeric complex composed of an alpha, a beta and a gamma subunit.

The protein localises to the cytoplasm. The protein resides in the cytosol. Component of the eIF2 complex that functions in the early steps of protein synthesis by forming a ternary complex with GTP and initiator tRNA. This complex binds to a 40S ribosomal subunit, followed by mRNA binding to form a 43S pre-initiation complex (43S PIC). Junction of the 60S ribosomal subunit to form the 80S initiation complex is preceded by hydrolysis of the GTP bound to eIF2 and release of an eIF2-GDP binary complex. In order for eIF2 to recycle and catalyze another round of initiation, the GDP bound to eIF2 must exchange with GTP by way of a reaction catalyzed by eIF2B. The chain is Eukaryotic translation initiation factor 2 subunit beta from Triticum aestivum (Wheat).